A 316-amino-acid chain; its full sequence is tRNA dimethylallyltransferase (316 aa).

17 to 24 is an ATP binding site; it reads GPTASGKT. Position 19–24 (19–24) interacts with substrate; it reads TASGKT. Interaction with substrate tRNA stretches follow at residues 42–45, 166–170, and 247–252; these read DSAL, QRLSR, and RCVGYR.

It belongs to the IPP transferase family. In terms of assembly, monomer. Mg(2+) is required as a cofactor.

It carries out the reaction adenosine(37) in tRNA + dimethylallyl diphosphate = N(6)-dimethylallyladenosine(37) in tRNA + diphosphate. In terms of biological role, catalyzes the transfer of a dimethylallyl group onto the adenine at position 37 in tRNAs that read codons beginning with uridine, leading to the formation of N6-(dimethylallyl)adenosine (i(6)A). In Citrobacter koseri (strain ATCC BAA-895 / CDC 4225-83 / SGSC4696), this protein is tRNA dimethylallyltransferase.